We begin with the raw amino-acid sequence, 367 residues long: Leu/Ile/Val-binding protein (367 aa).

Positions 1 to 23 are cleaved as a signal peptide; it reads MNMKGKALLAGCIALSLSNMAFA. Cysteine 76 and cysteine 101 form a disulfide bridge.

Belongs to the leucine-binding protein family.

It is found in the periplasm. This protein is a component of the leucine, isoleucine, valine, (threonine) transport system, which is one of the two periplasmic binding protein-dependent transport systems of the high-affinity transport of the branched-chain amino acids. The polypeptide is Leu/Ile/Val-binding protein (livJ) (Citrobacter freundii).